Consider the following 281-residue polypeptide: MAQITMSDMLKAGLHFGHQTRRWNPKMKQFILTQRNGIHIINLFKSLDMIDKAYDFIKTTVAHNGTVLFVGTKKQAQEAIANQATRVNMPYVSERWLGGMLTNFQTVSKRVNRLKELEEMDFTDVHGSGLTKKELLLLEREKDKLNKQLGGIRNMNRTPSAMFVVDITKETLAVEEAHKLGIPVVAIVDTNADPDTVEYPIPANDDAIRGIELLTSLMADAVAEGLLERSGANKTEGEAAEQPMAAWEKELLTNEAPAEASAEAAAPAAAEGETAEAPKAE.

The interval 229–281 (RSGANKTEGEAAEQPMAAWEKELLTNEAPAEASAEAAAPAAAEGETAEAPKAE) is disordered. The span at 255–275 (EAPAEASAEAAAPAAAEGETA) shows a compositional bias: low complexity.

Belongs to the universal ribosomal protein uS2 family.

The polypeptide is Small ribosomal subunit protein uS2 (Bifidobacterium longum subsp. infantis (strain ATCC 15697 / DSM 20088 / JCM 1222 / NCTC 11817 / S12)).